The primary structure comprises 69 residues: Antimicrobial peptide ISAMP (69 aa).

An N-terminal signal peptide occupies residues 1 to 23; the sequence is MRAVAIFIVTLLVLECVYFVMSE.

As to expression, expressed in the fat body, hemocytes and salivary glands of partially-fed female ticks. Not expressed in the midgut.

The protein localises to the secreted. In terms of biological role, has antimicrobial activity against B.cereus (MIC=5.8 ug/ml), B.subtilis (MIC=12.3 ug/ml), S.aureus (MIC=10.4 ug/ml), E.coli Edl 933 (MIC=3.2 ug/ml) and E.coli MG/655 (MIC=4.2 ug/ml). Non-hemolytic. The protein is Antimicrobial peptide ISAMP of Ixodes scapularis (Black-legged tick).